A 123-amino-acid chain; its full sequence is Small ribosomal subunit protein uS12 (123 aa).

Residues 1 to 22 (MATINQLVRQPRKRSVEKSDVP) form a disordered region. Asp-89 is subject to 3-methylthioaspartic acid. The tract at residues 100–123 (GSLDTSGVKGRNQGRSKYGTKRPK) is disordered. A compositionally biased stretch (basic residues) spans 111 to 123 (NQGRSKYGTKRPK).

It belongs to the universal ribosomal protein uS12 family. As to quaternary structure, part of the 30S ribosomal subunit. Contacts proteins S8 and S17. May interact with IF1 in the 30S initiation complex.

Functionally, with S4 and S5 plays an important role in translational accuracy. Its function is as follows. Interacts with and stabilizes bases of the 16S rRNA that are involved in tRNA selection in the A site and with the mRNA backbone. Located at the interface of the 30S and 50S subunits, it traverses the body of the 30S subunit contacting proteins on the other side and probably holding the rRNA structure together. The combined cluster of proteins S8, S12 and S17 appears to hold together the shoulder and platform of the 30S subunit. In Pseudomonas entomophila (strain L48), this protein is Small ribosomal subunit protein uS12.